Reading from the N-terminus, the 282-residue chain is Ribonuclease 3 (282 aa).

The RNase III domain maps to 18–141; that stretch reads FVAFFKSLNI…LVAAIYEDLG (124 aa). A Mg(2+)-binding site is contributed by Glu59. Asp63 is a catalytic residue. Positions 127 and 130 each coordinate Mg(2+). Glu130 is a catalytic residue.

It belongs to the ribonuclease III family. Homodimer. Mg(2+) serves as cofactor.

It is found in the cytoplasm. The enzyme catalyses Endonucleolytic cleavage to 5'-phosphomonoester.. Its function is as follows. Digests double-stranded RNA. Involved in the processing of primary rRNA transcript to yield the immediate precursors to the large and small rRNAs (23S and 16S). Processes some mRNAs, and tRNAs when they are encoded in the rRNA operon. Processes pre-crRNA and tracrRNA of type II CRISPR loci if present in the organism. The sequence is that of Ribonuclease 3 from Mycoplasmoides pneumoniae (strain ATCC 15531 / DSM 23978 / CIP 103766 / NBRC 14401 / NCTC 10119 / FH) (Mycoplasma pneumoniae).